The sequence spans 85 residues: NAD(P)H-quinone oxidoreductase subunit L (85 aa).

2 consecutive transmembrane segments (helical) span residues 17 to 37 (IVAV…PGFV) and 54 to 74 (AFMY…SPFL).

This sequence belongs to the complex I NdhL subunit family. NDH-1 can be composed of about 15 different subunits; different subcomplexes with different compositions have been identified which probably have different functions.

It localises to the cellular thylakoid membrane. It catalyses the reaction a plastoquinone + NADH + (n+1) H(+)(in) = a plastoquinol + NAD(+) + n H(+)(out). It carries out the reaction a plastoquinone + NADPH + (n+1) H(+)(in) = a plastoquinol + NADP(+) + n H(+)(out). NDH-1 shuttles electrons from an unknown electron donor, via FMN and iron-sulfur (Fe-S) centers, to quinones in the respiratory and/or the photosynthetic chain. The immediate electron acceptor for the enzyme in this species is believed to be plastoquinone. Couples the redox reaction to proton translocation, and thus conserves the redox energy in a proton gradient. Cyanobacterial NDH-1 also plays a role in inorganic carbon-concentration. The sequence is that of NAD(P)H-quinone oxidoreductase subunit L from Crocosphaera subtropica (strain ATCC 51142 / BH68) (Cyanothece sp. (strain ATCC 51142)).